Here is a 628-residue protein sequence, read N- to C-terminus: Probable alpha-L-arabinofuranosidase A (628 aa).

The first 25 residues, 1 to 25, serve as a signal peptide directing secretion; the sequence is MVAFSALSGVSAVSLLLSLVQNAHG. Residues Asn-36, Asn-51, Asn-74, Asn-152, Asn-171, Asn-260, Asn-359, Asn-440, Asn-493, and Asn-610 are each glycosylated (N-linked (GlcNAc...) asparagine).

Belongs to the glycosyl hydrolase 51 family.

It is found in the secreted. It carries out the reaction Hydrolysis of terminal non-reducing alpha-L-arabinofuranoside residues in alpha-L-arabinosides.. Its pathway is glycan metabolism; L-arabinan degradation. Alpha-L-arabinofuranosidase involved in the degradation of arabinoxylan, a major component of plant hemicellulose. Acts only on small linear 1,5-alpha-linked L-arabinofuranosyl oligosaccharides. The chain is Probable alpha-L-arabinofuranosidase A (abfA) from Aspergillus niger (strain ATCC MYA-4892 / CBS 513.88 / FGSC A1513).